An 89-amino-acid polypeptide reads, in one-letter code: UPF0223 protein BCB4264_A4064 (89 aa).

This sequence belongs to the UPF0223 family.

In Bacillus cereus (strain B4264), this protein is UPF0223 protein BCB4264_A4064.